The sequence spans 93 residues: uncharacterized protein (93 aa).

It to M.tuberculosis Rv1738.

This is an uncharacterized protein from Mycobacterium tuberculosis (strain CDC 1551 / Oshkosh).